Consider the following 70-residue polypeptide: uncharacterized protein (70 aa).

This is an uncharacterized protein from Schizosaccharomyces pombe (strain 972 / ATCC 24843) (Fission yeast).